Here is a 75-residue protein sequence, read N- to C-terminus: Conotoxin Vt15.1 (75 aa).

The N-terminal stretch at 1–19 (MMPVILPLLLSLAIRGGDG) is a signal peptide. A propeptide spanning residues 20–43 (QAIQGDRDLIAKLFKRYQEHGLSV) is cleaved from the precursor. Trp73 is subject to Tryptophan amide.

It belongs to the conotoxin V superfamily. Contains 4 disulfide bonds. In terms of tissue distribution, expressed by the venom duct.

It localises to the secreted. The chain is Conotoxin Vt15.1 from Conus planorbis (Planorbis cone).